Here is a 103-residue protein sequence, read N- to C-terminus: Large ribosomal subunit protein bL21 (103 aa).

The protein belongs to the bacterial ribosomal protein bL21 family. As to quaternary structure, part of the 50S ribosomal subunit. Contacts protein L20.

In terms of biological role, this protein binds to 23S rRNA in the presence of protein L20. This Mycobacterium leprae (strain Br4923) protein is Large ribosomal subunit protein bL21.